We begin with the raw amino-acid sequence, 192 residues long: Putative BTB/POZ domain-containing protein At4g04090 (192 aa).

Residues 23–96 (VDVRLMARDS…TYSDGSMLSE (74 aa)) form the BTB domain.

The protein operates within protein modification; protein ubiquitination. Functionally, may act as a substrate-specific adapter of an E3 ubiquitin-protein ligase complex (CUL3-RBX1-BTB) which mediates the ubiquitination and subsequent proteasomal degradation of target proteins. The sequence is that of Putative BTB/POZ domain-containing protein At4g04090 from Arabidopsis thaliana (Mouse-ear cress).